The chain runs to 525 residues: GMP synthase [glutamine-hydrolyzing] (525 aa).

Positions 9–207 (RILILDFGSQ…VLDICGCAAL (199 aa)) constitute a Glutamine amidotransferase type-1 domain. Cys86 functions as the Nucleophile in the catalytic mechanism. Residues His181 and Glu183 contribute to the active site. In terms of domain architecture, GMPS ATP-PPase spans 208 to 400 (WTPSNIVDDA…LGLPYDMVYR (193 aa)). 235-241 (SGGVDSS) is a binding site for ATP.

In terms of assembly, homodimer.

The enzyme catalyses XMP + L-glutamine + ATP + H2O = GMP + L-glutamate + AMP + diphosphate + 2 H(+). The protein operates within purine metabolism; GMP biosynthesis; GMP from XMP (L-Gln route): step 1/1. In terms of biological role, catalyzes the synthesis of GMP from XMP. In Pseudomonas aeruginosa (strain LESB58), this protein is GMP synthase [glutamine-hydrolyzing].